The sequence spans 153 residues: UPF0260 protein YcgN (153 aa).

It belongs to the UPF0260 family.

This chain is UPF0260 protein YcgN, found in Salmonella agona (strain SL483).